The primary structure comprises 24 residues: 60 kDa chaperonin, mitochondrial (24 aa).

This sequence belongs to the chaperonin (HSP60) family. In terms of assembly, forms a single seven-member ring complex, in tight association with the p63 protein. In terms of tissue distribution, testis.

It localises to the mitochondrion. Implicated in mitochondrial protein import and macromolecular assembly. May facilitate the correct folding of imported proteins. May also prevent misfolding and promote the refolding and proper assembly of unfolded polypeptides generated under stress conditions in the mitochondrial matrix. This chain is 60 kDa chaperonin, mitochondrial, found in Heliothis virescens (Tobacco budworm moth).